Consider the following 930-residue polypeptide: Carnosine synthase 1 (930 aa).

The tract at residues 1–24 (MISVDRLSEEQALGMKEQEWAGPE) is disordered. An ATP-grasp domain is found at 624-825 (RPPPAAFSVP…LLLAAVLLAL (202 aa)). ATP is bound at residue 650–716 (VPFPAVAKLE…MEYVPGTEHD (67 aa)). Mg(2+)-binding residues include E782, E794, and N796. Positions 782, 794, and 796 each coordinate Mn(2+).

In terms of assembly, homotetramer. The cofactor is Mg(2+). Mn(2+) is required as a cofactor.

The enzyme catalyses beta-alanine + L-histidine + ATP = carnosine + ADP + phosphate + H(+). The catalysed reaction is 4-aminobutanoate + L-histidine + ATP = L-homocarnosine + ADP + phosphate + H(+). Functionally, catalyzes the synthesis of carnosine and homocarnosine. Carnosine is synthesized more efficiently than homocarnosine. The chain is Carnosine synthase 1 from Gallus gallus (Chicken).